A 319-amino-acid chain; its full sequence is Aspartate carbamoyltransferase catalytic subunit (319 aa).

Arg65 and Thr66 together coordinate carbamoyl phosphate. Lys93 is a binding site for L-aspartate. Carbamoyl phosphate contacts are provided by Arg115, His149, and Gln152. L-aspartate-binding residues include Arg182 and Arg237. Gly278 and Pro279 together coordinate carbamoyl phosphate.

Belongs to the aspartate/ornithine carbamoyltransferase superfamily. ATCase family. Heterododecamer (2C3:3R2) of six catalytic PyrB chains organized as two trimers (C3), and six regulatory PyrI chains organized as three dimers (R2).

It catalyses the reaction carbamoyl phosphate + L-aspartate = N-carbamoyl-L-aspartate + phosphate + H(+). The protein operates within pyrimidine metabolism; UMP biosynthesis via de novo pathway; (S)-dihydroorotate from bicarbonate: step 2/3. Its function is as follows. Catalyzes the condensation of carbamoyl phosphate and aspartate to form carbamoyl aspartate and inorganic phosphate, the committed step in the de novo pyrimidine nucleotide biosynthesis pathway. This is Aspartate carbamoyltransferase catalytic subunit from Janthinobacterium sp. (strain Marseille) (Minibacterium massiliensis).